The sequence spans 566 residues: Hemocyanin B chain (566 aa).

An intrachain disulfide couples cysteine 82 to cysteine 87. Cu cation is bound by residues histidine 183, histidine 187, histidine 213, histidine 309, histidine 313, and histidine 347.

The protein belongs to the tyrosinase family. Hemocyanin subfamily. Hemolymph.

It is found in the secreted. The protein localises to the extracellular space. Functionally, hemocyanins are copper-containing oxygen carriers occurring freely dissolved in the hemolymph of many mollusks and arthropods. This is Hemocyanin B chain from Astacus leptodactylus (Turkish narrow-clawed crayfish).